The chain runs to 451 residues: Tubulin beta-1 chain (451 aa).

The short motif at 1–4 (MREI) is the MREI motif element. GTP is bound by residues Q11, E69, S138, G142, T143, and G144. E69 contributes to the Mg(2+) binding site. S172 is modified (phosphoserine; by CDK1). 2 residues coordinate GTP: N204 and N226. Residues 432–451 (LEEDEEVTEEAEMEPEDKGH) form a disordered region. Residues 433-451 (EEDEEVTEEAEMEPEDKGH) are compositionally biased toward acidic residues. Residue E440 is modified to 5-glutamyl polyglutamate.

This sequence belongs to the tubulin family. Dimer of alpha and beta chains. A typical microtubule is a hollow water-filled tube with an outer diameter of 25 nm and an inner diameter of 15 nM. Alpha-beta heterodimers associate head-to-tail to form protofilaments running lengthwise along the microtubule wall with the beta-tubulin subunit facing the microtubule plus end conferring a structural polarity. Microtubules usually have 13 protofilaments but different protofilament numbers can be found in some organisms and specialized cells. Interacts with RANBP10. Requires Mg(2+) as cofactor. In terms of processing, some glutamate residues at the C-terminus are polyglutamylated, resulting in polyglutamate chains on the gamma-carboxyl group. Polyglutamylation plays a key role in microtubule severing by spastin (SPAST). SPAST preferentially recognizes and acts on microtubules decorated with short polyglutamate tails: severing activity by SPAST increases as the number of glutamates per tubulin rises from one to eight, but decreases beyond this glutamylation threshold. Glutamylation is also involved in cilia motility. Some glutamate residues at the C-terminus are monoglycylated but not polyglycylated due to the absence of functional TTLL10 in human. Monoglycylation is mainly limited to tubulin incorporated into cilia and flagella axonemes, which is required for their stability and maintenance. Flagella glycylation controls sperm motility. Both polyglutamylation and monoglycylation can coexist on the same protein on adjacent residues, and lowering glycylation levels increases polyglutamylation, and reciprocally. Post-translationally, phosphorylated on Ser-172 by CDK1 during the cell cycle, from metaphase to telophase, but not in interphase. This phosphorylation inhibits tubulin incorporation into microtubules. In terms of tissue distribution, hematopoietic cell-specific. Major isotype in leukocytes, where it represents 50% of all beta-tubulins.

The protein resides in the cytoplasm. Its subcellular location is the cytoskeleton. Its function is as follows. Tubulin is the major constituent of microtubules, a cylinder consisting of laterally associated linear protofilaments composed of alpha- and beta-tubulin heterodimers. Microtubules grow by the addition of GTP-tubulin dimers to the microtubule end, where a stabilizing cap forms. Below the cap, tubulin dimers are in GDP-bound state, owing to GTPase activity of alpha-tubulin. This is Tubulin beta-1 chain (TUBB1) from Homo sapiens (Human).